The sequence spans 301 residues: Mitochondrial carnitine/acylcarnitine carrier protein (301 aa).

N-acetylalanine is present on alanine 2. The Cytoplasmic portion of the chain corresponds to 2-12; sequence ADQPKPISPLK. Solcar repeat units follow at residues 8–99, 108–196, and 207–293; these read ISPL…GKKL, LSYP…VKNI, and LSVP…AMKF. The chain crosses the membrane as a helical span at residues 13-31; the sequence is NLLAGGFGGVCLVFVGHPL. Residues 32 to 73 lie on the Mitochondrial matrix side of the membrane; that stretch reads DTVKVRLQTQPPSLPGQPPMYSGTFDCFRKTLFREGIRGLYR. A helical membrane pass occupies residues 74–93; it reads GMAAPIIGVTPMFAVCFFGF. Over 94–112 the chain is Cytoplasmic; that stretch reads GLGKKLQQKHPEDVLSYPQ. Residues 113 to 131 form a helical membrane-spanning segment; that stretch reads LFAAGMLSGIFTTGIMTPG. At 132 to 170 the chain is on the mitochondrial matrix side; sequence ERIKCLLQIQASSGETKYTGTLDCAKKLYQEFGIRGIYK. N6-acetyllysine is present on residues lysine 148 and lysine 157. An N6-acetyllysine; alternate modification is found at lysine 170. At lysine 170 the chain carries N6-succinyllysine; alternate. A helical membrane pass occupies residues 171-190; sequence GTVVTLMRDVPASGMYFMTY. The Cytoplasmic segment spans residues 191 to 211; that stretch reads EWVKNIFTPEGKRVSELSVPR. A helical membrane pass occupies residues 212-230; it reads VLVAGGIAGIFNWAVAIPP. The Mitochondrial matrix portion of the chain corresponds to 231–267; the sequence is DVLKSRFQTAPPGKYPNGFRDVLRELIPDEGVTSLYK. A helical transmembrane segment spans residues 268-287; that stretch reads GFNAVMIRAFPANAACFLGF. The Cytoplasmic segment spans residues 288-301; that stretch reads EVAMKFLNWATPNL.

Belongs to the mitochondrial carrier (TC 2.A.29) family.

The protein resides in the mitochondrion inner membrane. The catalysed reaction is O-acetyl-(R)-carnitine(in) + (R)-carnitine(out) = O-acetyl-(R)-carnitine(out) + (R)-carnitine(in). It catalyses the reaction an O-acyl-(R)-carnitine(in) + (R)-carnitine(out) = an O-acyl-(R)-carnitine(out) + (R)-carnitine(in). The enzyme catalyses O-propanoyl-(R)-carnitine(in) + (R)-carnitine(out) = O-propanoyl-(R)-carnitine(out) + (R)-carnitine(in). It carries out the reaction O-hexadecanoyl-(R)-carnitine(in) + (R)-carnitine(out) = O-hexadecanoyl-(R)-carnitine(out) + (R)-carnitine(in). The catalysed reaction is O-octanoyl-(R)-carnitine(in) + (R)-carnitine(out) = O-octanoyl-(R)-carnitine(out) + (R)-carnitine(in). It catalyses the reaction (R)-carnitine(in) = (R)-carnitine(out). In terms of biological role, mediates the electroneutral exchange of acylcarnitines (O-acyl-(R)-carnitine or L-acylcarnitine) of different acyl chain lengths (ranging from O-acetyl-(R)-carnitine to long-chain O-acyl-(R)-carnitines) with free carnitine ((R)-carnitine or L-carnitine) across the mitochondrial inner membrane, via a ping-pong mechanism. Key player in the mitochondrial oxidation pathway, it translocates the fatty acids in the form of acylcarnitines into the mitochondrial matrix, where the carnitine palmitoyltransferase 2 (CPT-2) activates them to undergo fatty acid beta-oxidation. Catalyzes the unidirectional transport (uniport) of carnitine at lower rates than the antiport (exchange). This Macaca fascicularis (Crab-eating macaque) protein is Mitochondrial carnitine/acylcarnitine carrier protein (SLC25A20).